A 422-amino-acid chain; its full sequence is MSNNEFLNKLGEQAKKASYALASLTGQQKTALLRCIASKLTDAKANIIAANQQDVEQAKANGLSEAMIDRLLLDEPRLLSVIADIDNVIGLTDPVGSEIDSRLLDNGLRLSRRRVPLGVIGVIYEARPNVTVDIAVLALKTGNAVILRGGKETLASNKALCKVIRSAMAEQGLPEDCVQLIDNPDRSLVSGLLKLDKYVDMIVPRGGQNLQRLCAEQATIPVILGGIGICHLFVDVQADLDKAVAVIENAKVQRPTVCNALDTVLVHQTNAASFIPALCQQLATKGVSFYGCAQTQAVMANNEQQIMQATDESYSTEWLSLTLGIKVVGSLEEAVAHIRQYSSGHSESILTDNIHTASEFMNAVDSAAVYVNASTRFTDGGEFGLGAEVAVSTQKLHARGPMGLEALTTYKWLAWGDYTVRG.

The protein belongs to the gamma-glutamyl phosphate reductase family.

It is found in the cytoplasm. The enzyme catalyses L-glutamate 5-semialdehyde + phosphate + NADP(+) = L-glutamyl 5-phosphate + NADPH + H(+). It functions in the pathway amino-acid biosynthesis; L-proline biosynthesis; L-glutamate 5-semialdehyde from L-glutamate: step 2/2. In terms of biological role, catalyzes the NADPH-dependent reduction of L-glutamate 5-phosphate into L-glutamate 5-semialdehyde and phosphate. The product spontaneously undergoes cyclization to form 1-pyrroline-5-carboxylate. The polypeptide is Gamma-glutamyl phosphate reductase (Shewanella piezotolerans (strain WP3 / JCM 13877)).